The primary structure comprises 333 residues: Ferrochelatase (333 aa).

Fe cation contacts are provided by His202 and Glu284.

It belongs to the ferrochelatase family.

It is found in the cytoplasm. It catalyses the reaction heme b + 2 H(+) = protoporphyrin IX + Fe(2+). It participates in porphyrin-containing compound metabolism; protoheme biosynthesis; protoheme from protoporphyrin-IX: step 1/1. Catalyzes the ferrous insertion into protoporphyrin IX. The protein is Ferrochelatase of Francisella tularensis subsp. tularensis (strain FSC 198).